A 356-amino-acid chain; its full sequence is Cobalt-precorrin-5B C(1)-methyltransferase (356 aa).

This sequence belongs to the CbiD family.

The catalysed reaction is Co-precorrin-5B + S-adenosyl-L-methionine = Co-precorrin-6A + S-adenosyl-L-homocysteine. It participates in cofactor biosynthesis; adenosylcobalamin biosynthesis; cob(II)yrinate a,c-diamide from sirohydrochlorin (anaerobic route): step 6/10. Catalyzes the methylation of C-1 in cobalt-precorrin-5B to form cobalt-precorrin-6A. This Geobacter sp. (strain M21) protein is Cobalt-precorrin-5B C(1)-methyltransferase.